The chain runs to 239 residues: Large ribosomal subunit protein uL2 (239 aa).

The protein belongs to the universal ribosomal protein uL2 family.

It is found in the cytoplasm. This chain is Large ribosomal subunit protein uL2 (RPL8), found in Encephalitozoon cuniculi (strain GB-M1) (Microsporidian parasite).